Here is a 217-residue protein sequence, read N- to C-terminus: Probable GTP-binding protein EngB (217 aa).

In terms of domain architecture, EngB-type G spans G32 to T205. GTP-binding positions include G40–S47, G67–L71, D85–G88, T152–D155, and V184–N186. Residues S47 and T69 each coordinate Mg(2+).

It belongs to the TRAFAC class TrmE-Era-EngA-EngB-Septin-like GTPase superfamily. EngB GTPase family. Mg(2+) is required as a cofactor.

In terms of biological role, necessary for normal cell division and for the maintenance of normal septation. This chain is Probable GTP-binding protein EngB, found in Leptospira interrogans serogroup Icterohaemorrhagiae serovar copenhageni (strain Fiocruz L1-130).